Consider the following 271-residue polypeptide: Putative pyruvate, phosphate dikinase regulatory protein (271 aa).

150 to 157 (GVSRTSKT) contributes to the ADP binding site.

Belongs to the pyruvate, phosphate/water dikinase regulatory protein family. PDRP subfamily.

The enzyme catalyses N(tele)-phospho-L-histidyl/L-threonyl-[pyruvate, phosphate dikinase] + ADP = N(tele)-phospho-L-histidyl/O-phospho-L-threonyl-[pyruvate, phosphate dikinase] + AMP + H(+). It catalyses the reaction N(tele)-phospho-L-histidyl/O-phospho-L-threonyl-[pyruvate, phosphate dikinase] + phosphate + H(+) = N(tele)-phospho-L-histidyl/L-threonyl-[pyruvate, phosphate dikinase] + diphosphate. In terms of biological role, bifunctional serine/threonine kinase and phosphorylase involved in the regulation of the pyruvate, phosphate dikinase (PPDK) by catalyzing its phosphorylation/dephosphorylation. The sequence is that of Putative pyruvate, phosphate dikinase regulatory protein from Oceanobacillus iheyensis (strain DSM 14371 / CIP 107618 / JCM 11309 / KCTC 3954 / HTE831).